Reading from the N-terminus, the 859-residue chain is Protein EFR3 homolog (859 aa).

Residues 696 to 714 (RKNDGSGDQWQNDTPNFDS) show a composition bias toward polar residues. Residues 696 to 728 (RKNDGSGDQWQNDTPNFDSTDGRESPSGYKTVG) are disordered.

This sequence belongs to the EFR3 family.

This Caenorhabditis elegans protein is Protein EFR3 homolog.